The chain runs to 345 residues: Glycerol-3-phosphate dehydrogenase [NAD(P)+] (345 aa).

Positions 23, 24, 44, and 118 each coordinate NADPH. 3 residues coordinate sn-glycerol 3-phosphate: K118, G147, and T149. Position 151 (A151) interacts with NADPH. Sn-glycerol 3-phosphate contacts are provided by K203, D256, S266, R267, and N268. The active-site Proton acceptor is K203. R267 is a binding site for NADPH. Residues V291 and E293 each coordinate NADPH.

Belongs to the NAD-dependent glycerol-3-phosphate dehydrogenase family.

It localises to the cytoplasm. The enzyme catalyses sn-glycerol 3-phosphate + NAD(+) = dihydroxyacetone phosphate + NADH + H(+). The catalysed reaction is sn-glycerol 3-phosphate + NADP(+) = dihydroxyacetone phosphate + NADPH + H(+). It participates in membrane lipid metabolism; glycerophospholipid metabolism. In terms of biological role, catalyzes the reduction of the glycolytic intermediate dihydroxyacetone phosphate (DHAP) to sn-glycerol 3-phosphate (G3P), the key precursor for phospholipid synthesis. The polypeptide is Glycerol-3-phosphate dehydrogenase [NAD(P)+] (Vibrio campbellii (strain ATCC BAA-1116)).